We begin with the raw amino-acid sequence, 182 residues long: ATP synthase subunit b, chloroplastic (182 aa).

Residues isoleucine 31 to leucine 53 form a helical membrane-spanning segment.

The protein belongs to the ATPase B chain family. As to quaternary structure, F-type ATPases have 2 components, F(1) - the catalytic core - and F(0) - the membrane proton channel. F(1) has five subunits: alpha(3), beta(3), gamma(1), delta(1), epsilon(1). F(0) has four main subunits: a(1), b(1), b'(1) and c(10-14). The alpha and beta chains form an alternating ring which encloses part of the gamma chain. F(1) is attached to F(0) by a central stalk formed by the gamma and epsilon chains, while a peripheral stalk is formed by the delta, b and b' chains.

It is found in the plastid. It localises to the chloroplast thylakoid membrane. In terms of biological role, f(1)F(0) ATP synthase produces ATP from ADP in the presence of a proton or sodium gradient. F-type ATPases consist of two structural domains, F(1) containing the extramembraneous catalytic core and F(0) containing the membrane proton channel, linked together by a central stalk and a peripheral stalk. During catalysis, ATP synthesis in the catalytic domain of F(1) is coupled via a rotary mechanism of the central stalk subunits to proton translocation. Component of the F(0) channel, it forms part of the peripheral stalk, linking F(1) to F(0). This Welwitschia mirabilis (Tree tumbo) protein is ATP synthase subunit b, chloroplastic.